Here is a 193-residue protein sequence, read N- to C-terminus: Ion-translocating oxidoreductase complex subunit A (193 aa).

6 helical membrane-spanning segments follow: residues 5-25 (ILLI…FLGL), 39-59 (IGMG…AYLV), 72-92 (LRTL…EMVI), 102-122 (LLGI…VALL), 134-154 (VIYG…FAAL), and 171-191 (SIAL…SGLV).

It belongs to the NqrDE/RnfAE family. The complex is composed of six subunits: RnfA, RnfB, RnfC, RnfD, RnfE and RnfG.

The protein resides in the cell inner membrane. Part of a membrane-bound complex that couples electron transfer with translocation of ions across the membrane. This is Ion-translocating oxidoreductase complex subunit A from Histophilus somni (strain 129Pt) (Haemophilus somnus).